The following is a 936-amino-acid chain: MTDYKDTLNLPQTDFPMRANLPEREPQTLARWQTLDLYRKIRKDREGQPKFILHDGPPYANGRAHLGTAFNKTLKDIVVKSKTLSGFDAPFVPGWDCHGLPIELNVEKKLGKDKLSANAFRQACRDYAFSQIELQRDDFQRLGVLGDWQHPYLTMDFGYEADTVRALAKIVANGHLLRGQKPVHWCAACGSALAEAEVEYRDKASPAVDVGFEAVDAEAVRQRFGVKNATTRVLVPIWTTTPWTLPANEAVSVHPELHYALVKSELQNQPVYLILAKDLVDSAMLRYGVDDYEVHGNLKGDALEGMQLQHPFLDRIVPIILGEHVTTEAGTGNVHTAPAHGLEDYFVAEKYNLPINNPVDARGRFIPDTFLVGGQPVFKANEPIIVLLADSGHLLHSETIQHSYPHCWRHKTPLIFRATPQWFIGMNKNGLRERALAEIEKVTWLPAWGEARIGKLVADRPDWCISRQRLWGIPIPLFIHKKSGELHPKSPALMEKVAQLIEKESVDAWFDLDPKVLLGDDADHYEKVTDVLDVWFDSGVTHFCVLEKRRELKVPADIYLEGSDQHRGWFQSSLLTSLAIRDKAPYKSVLTYGFVVDSQGRKMSKSLGNVILPADVVKNLGADVLRLWAASMDYTVEVNVSDEILKRASDAYRRIRNTARFLLSNLYDFDPKKDKVAVDQLVALDRWAIFTTQKLQEKIITAYDRYRFPAIYQAIHNFCTVEMGSFYLDIIKDRLYTSKESGLPRRSAQTALYYIAEAFVRWIAPIISFTADEIWQFMPGDREPSVFLTQWFSDFPNAALSGEEEQRWQLLLQIRDEVNKALETYRNEGKIGSALTAEVVLYADERLNAVIATLGEELRFVLITSEASVLPFNEKSKAAFDTALPGLALEINVSEFEKCARCWQRRSSVGQIKEHADLCDRCVSNAFEDGEMRQFA.

The 'HIGH' region motif lies at Pro58–Thr68. Glu561 provides a ligand contact to L-isoleucyl-5'-AMP. The 'KMSKS' region signature appears at Lys602–Ser606. Lys605 is an ATP binding site. Zn(2+) is bound by residues Cys899, Cys902, Cys919, and Cys922.

Belongs to the class-I aminoacyl-tRNA synthetase family. IleS type 1 subfamily. In terms of assembly, monomer. Zn(2+) serves as cofactor.

The protein resides in the cytoplasm. The enzyme catalyses tRNA(Ile) + L-isoleucine + ATP = L-isoleucyl-tRNA(Ile) + AMP + diphosphate. Its function is as follows. Catalyzes the attachment of isoleucine to tRNA(Ile). As IleRS can inadvertently accommodate and process structurally similar amino acids such as valine, to avoid such errors it has two additional distinct tRNA(Ile)-dependent editing activities. One activity is designated as 'pretransfer' editing and involves the hydrolysis of activated Val-AMP. The other activity is designated 'posttransfer' editing and involves deacylation of mischarged Val-tRNA(Ile). The chain is Isoleucine--tRNA ligase from Coxiella burnetii (strain RSA 331 / Henzerling II).